A 665-amino-acid chain; its full sequence is Envelope glycoprotein (665 aa).

Positions 1-31 (MESTTLSKPFKNQVNPWGPLIVLLILGRVNP) are cleaved as a signal peptide. The interval 32-267 (VALGNSPHQV…KITDSGPRVP (236 aa)) is receptor-binding domain (RBD). Over 32 to 605 (VALGNSPHQV…FNGSPWFTTL (574 aa)) the chain is Extracellular. Residue Asn43 is glycosylated (N-linked (GlcNAc...) asparagine; by host). Disulfide bonds link Cys77/Cys129, Cys103/Cys118, Cys104/Cys114, Cys152/Cys172, and Cys164/Cys177. Asp117 serves as a coordination point for Zn(2+). Asn199 and Asn211 each carry an N-linked (GlcNAc...) asparagine; by host glycan. Cys209 and Cys215 are disulfide-bonded. Positions 266 to 307 (VPIGPNPVLSDQRPPSQPRSPPHSNSTPTETPLTLPEPPPAG) are disordered. Asn324 is a glycosylation site (N-linked (GlcNAc...) asparagine; by host). 6 disulfides stabilise this stretch: Cys334–Cys337, Cys334–Cys558, Cys364–Cys418, Cys383–Cys395, Cys425–Cys438, and Cys550–Cys557. A CXXC motif is present at residues 334–337 (CWLC). N-linked (GlcNAc...) asparagine; by host glycosylation is found at Asn356 and Asn363. N-linked (GlcNAc...) asparagine; by host glycans are attached at residues Asn396, Asn400, and Asn432. The tract at residues 470-490 (VSLTLALLLGGLTMGGIAAGI) is fusion peptide. Residues 505–532 (AAVHDDLKEVEKSITNLEKSLTSLSEVV) are a coiled coil. The segment at 533 to 549 (LQNRRGLDLLFLKEGGL) is immunosuppression. Residues 550 to 558 (CAALKEECC) carry the CX6CC motif. A helical transmembrane segment spans residues 606–626 (ISTIMGPLIVLLLILLLGPCI). Cys625 is lipidated: S-palmitoyl cysteine; by host. The Cytoplasmic segment spans residues 627–665 (LNRLVQFVKDRISVVQALVLTQQYHQLKSIDPEEMESRE). Residues 650 to 653 (YHQL) carry the YXXL motif; contains endocytosis signal motif.

The mature envelope protein (Env) consists of a trimer of SU-TM heterodimers attached by a labile interchain disulfide bond. In terms of processing, specific enzymatic cleavages in vivo yield mature proteins. Envelope glycoproteins are synthesized as an inactive precursor that is N-glycosylated and processed likely by host cell furin or by a furin-like protease in the Golgi to yield the mature SU and TM proteins. The cleavage site between SU and TM requires the minimal sequence [KR]-X-[KR]-R. The R-peptide is released from the C-terminus of the cytoplasmic tail of the TM protein upon particle formation as a result of proteolytic cleavage by the viral protease. Cleavage of this peptide is required for TM to become fusogenic. The CXXC motif is highly conserved across a broad range of retroviral envelope proteins. It is thought to participate in the formation of a labile disulfide bond possibly with the CX6CC motif present in the transmembrane protein. Isomerization of the intersubunit disulfide bond to an SU intrachain disulfide bond is thought to occur upon receptor recognition in order to allow membrane fusion. Post-translationally, the transmembrane protein is palmitoylated. In terms of processing, the R-peptide is palmitoylated.

It is found in the virion membrane. The protein localises to the host cell membrane. In terms of biological role, the surface protein (SU) attaches the virus to the host cell by binding to its receptor. This interaction triggers the refolding of the transmembrane protein (TM) and is thought to activate its fusogenic potential by unmasking its fusion peptide. Fusion occurs at the host cell plasma membrane. Functionally, the transmembrane protein (TM) acts as a class I viral fusion protein. Under the current model, the protein has at least 3 conformational states: pre-fusion native state, pre-hairpin intermediate state, and post-fusion hairpin state. During viral and target cell membrane fusion, the coiled coil regions (heptad repeats) assume a trimer-of-hairpins structure, positioning the fusion peptide in close proximity to the C-terminal region of the ectodomain. The formation of this structure appears to drive apposition and subsequent fusion of viral and target cell membranes. Membranes fusion leads to delivery of the nucleocapsid into the cytoplasm. This Radiation murine leukemia virus protein is Envelope glycoprotein (env).